A 1043-amino-acid polypeptide reads, in one-letter code: Polycomb protein Pcl (1043 aa).

4 disordered regions span residues 1 to 34, 271 to 302, 317 to 346, and 395 to 422; these read MMNN…SAPP, PDST…PLLA, FKTV…AAPS, and KLRK…NTSP. Low complexity predominate over residues 25 to 34; that stretch reads PSTAVPSAPP. A compositionally biased stretch (pro residues) spans 324 to 344; the sequence is PPTPPTPPSPPPPPPAPPVAA. The region spanning 349-404 is the Tudor domain; it reads VTYALQEDVFIKCNDGRFYLGTIIDQTSDQYLIRFDDQSEQWCEPDKLRKLGGGSS. The segment covering 399-412 has biased composition (gly residues); it reads LGGGSSITAGGGGA. 2 PHD-type zinc fingers span residues 424–472 and 512–560; these read GPMC…CAKP and QIYC…VFCC. Residues 737 to 757 are compositionally biased toward basic and acidic residues; it reads AKKQAAQKADKHDELPLKPDL. Disordered regions lie at residues 737–819 and 931–985; these read AKKQ…TSSL and AKDL…PGHS. The segment covering 783–792 has biased composition (basic residues); that stretch reads SRKRKAFRLS. The segment covering 793 to 804 has biased composition (basic and acidic residues); sequence KRYDNSRNHCDL. Serine 805 and serine 806 each carry phosphoserine. Residues 807-819 are compositionally biased toward low complexity; it reads DENSSSSRGTSSL. The segment covering 945 to 954 has biased composition (basic residues); the sequence is THGRLLRQRP. A compositionally biased stretch (low complexity) spans 955–977; it reads QKQSPSQSRRNSTSSTATSSSSN.

The protein belongs to the Polycomblike family. As to quaternary structure, component of a form of the Esc/E(z) complex present specifically during early embryogenesis which is composed of Caf1-55, esc, E(z), Su(z)12, Pcl and HDAC1/Rpd3. This complex is distinct from the PRC1 complex, which contains many other PcG proteins like Pc, Ph, Psc, Su(z)2. The two complexes however cooperate and interact together during the first 3 hours of development to establish PcG silencing. Interacts with corto in vitro.

The protein localises to the nucleus. The protein resides in the chromosome. In terms of biological role, polycomb group (PcG) protein. While PcG proteins are generally required to maintain the transcriptionally repressive state of homeotic genes throughout development, this protein is specifically required during the first 6 hours of embryogenesis to establish the repressed state. Component of the Esc/E(z) complex, which methylates 'Lys-9' and 'Lys-27' residues of histone H3, leading to transcriptional repression of the affected target gene. The Esc/E(z) complex is necessary but not sufficient for the repression of homeotic target genes, suggesting that the recruitment of the distinct PRC1 complex is also required. Required for the correct spatial expression of the homeotic genes of the Antennapedia and Bithorax complexes. This Drosophila melanogaster (Fruit fly) protein is Polycomb protein Pcl (Pcl).